We begin with the raw amino-acid sequence, 557 residues long: Leucine-rich glioma-inactivated protein 1 (557 aa).

An N-terminal signal peptide occupies residues 1–34 (MESERSKRMGNACIPLKRIAYFLCLLSALLLTEG). The region spanning 35–72 (KKPAKPKCPAVCTCTKDNALCENARSIPRTVPPDVISL) is the LRRNT domain. LRR repeat units follow at residues 92 to 113 (SLQL…AFIG), 116 to 137 (HLEY…TFRG), and 140 to 161 (SLIH…IFKG). The region spanning 173–223 (NSFNCDCKLKWLVEWLGHTNATVEDIYCEGPPEYKKRKINSLSSKDFDCII) is the LRRCT domain. Asparagine 192 carries an N-linked (GlcNAc...) asparagine glycan. 7 EAR repeats span residues 225–267 (EFAK…EWDH), 271–313 (TFRN…KRDS), 317–364 (KFIK…KWNG), 366–415 (GFYS…QWNK), 419–462 (LFTN…KWGG), 464–506 (SFQD…NWDA), and 510–552 (KFVK…KHVI). Asparagine 277 carries N-linked (GlcNAc...) asparagine glycosylation. An N-linked (GlcNAc...) asparagine glycan is attached at asparagine 422.

Oligomer. Interacts with KCNA1 within a complex containing KCNA1, KCNA4 and KCNAB1. Part of a complex containing ADAM22, DLG4/PSD95 and CACNG2/Stargazin. Can bind to ADAM11 and ADAM23. Post-translationally, glycosylated. Predominantly expressed in neural tissues, especially in brain. Expression is reduced in low-grade brain tumors and significantly reduced or absent in malignant gliomas. In terms of tissue distribution, expressed in the occipital cortex and hippocampus; higher amounts are observed in the parietal and frontal cortices, putamen, and, particularly, in the temporal neocortex, where it is between 3 and 5 times more abundant than in the hippocampus (at protein level). Expression is absent in the cerebellum. As to expression, abundantly expressed in the occipital cortex and weakly expressed in the hippocampus (at protein level).

It localises to the secreted. The protein resides in the synapse. The protein localises to the cytoplasm. It is found in the golgi apparatus. Its subcellular location is the endoplasmic reticulum. Functionally, regulates voltage-gated potassium channels assembled from KCNA1, KCNA4 and KCNAB1. It slows down channel inactivation by precluding channel closure mediated by the KCNAB1 subunit. Ligand for ADAM22 that positively regulates synaptic transmission mediated by AMPA-type glutamate receptors. Plays a role in suppressing the production of MMP1/3 through the phosphatidylinositol 3-kinase/ERK pathway. May play a role in the control of neuroblastoma cell survival. The polypeptide is Leucine-rich glioma-inactivated protein 1 (LGI1) (Homo sapiens (Human)).